Reading from the N-terminus, the 146-residue chain is Hemoglobin subunit beta (146 aa).

Residues 2 to 146 enclose the Globin domain; sequence HWSAEEKQLI…VAHALARKYH (145 aa). 2 residues coordinate heme b: histidine 63 and histidine 92.

It belongs to the globin family. As to quaternary structure, heterotetramer of two alpha chains and two beta chains. As to expression, red blood cells.

Its function is as follows. Involved in oxygen transport from the lung to the various peripheral tissues. In Phasianus colchicus colchicus (Black-necked pheasant), this protein is Hemoglobin subunit beta (HBB).